We begin with the raw amino-acid sequence, 242 residues long: MMMDLFETGSYFFYLDGENVTLQPLEVAEGSPLYPGSDGTLSPCQDQMPPEAGSDSSGEEHVLAPPGLQPPHCPGQCLIWACKTCKRKSAPTDRRKAATLRERRRLKKINEAFEALKRRTVANPNQRLPKVEILRSAINYIERLQDLLHRLDQQDKMQELGVDPFSYRPKQENLEGADFLRTCSSQWPSVSDHSRGLVMTAKEGGTNIDSSASSSLRCLSSIVDSISSEEHTLPCVEEVGEK.

The disordered stretch occupies residues 31 to 63 (SPLYPGSDGTLSPCQDQMPPEAGSDSSGEEHVL). The 52-residue stretch at 93-144 (DRRKAATLRERRRLKKINEAFEALKRRTVANPNQRLPKVEILRSAINYIERL) folds into the bHLH domain.

In terms of assembly, efficient DNA binding requires dimerization with another bHLH protein.

It is found in the nucleus. Functionally, involved in muscle differentiation (myogenic factor). Induces fibroblasts to differentiate into myoblasts. Probable sequence specific DNA-binding protein. This chain is Myogenic factor 6 (MYF6), found in Sus scrofa (Pig).